We begin with the raw amino-acid sequence, 184 residues long: ATP-dependent protease subunit HslV (184 aa).

The active site involves Thr-11. Ala-165, Cys-168, and Thr-171 together coordinate Na(+).

It belongs to the peptidase T1B family. HslV subfamily. A double ring-shaped homohexamer of HslV is capped on each side by a ring-shaped HslU homohexamer. The assembly of the HslU/HslV complex is dependent on binding of ATP.

Its subcellular location is the cytoplasm. It catalyses the reaction ATP-dependent cleavage of peptide bonds with broad specificity.. Allosterically activated by HslU binding. Functionally, protease subunit of a proteasome-like degradation complex believed to be a general protein degrading machinery. The polypeptide is ATP-dependent protease subunit HslV (Zymomonas mobilis subsp. mobilis (strain ATCC 31821 / ZM4 / CP4)).